The following is a 306-amino-acid chain: Homoserine O-acetyltransferase (306 aa).

C142 serves as the catalytic Acyl-thioester intermediate. Positions 163 and 192 each coordinate substrate. The Proton acceptor role is filled by H235. Residue E237 is part of the active site. Substrate is bound at residue R249.

The protein belongs to the MetA family.

It localises to the cytoplasm. It carries out the reaction L-homoserine + acetyl-CoA = O-acetyl-L-homoserine + CoA. The protein operates within amino-acid biosynthesis; L-methionine biosynthesis via de novo pathway; O-acetyl-L-homoserine from L-homoserine: step 1/1. Functionally, transfers an acetyl group from acetyl-CoA to L-homoserine, forming acetyl-L-homoserine. In Clostridium botulinum (strain Alaska E43 / Type E3), this protein is Homoserine O-acetyltransferase.